We begin with the raw amino-acid sequence, 394 residues long: RNA demethylase ALKBH5 (394 aa).

Disordered stretches follow at residues 1–26 (MAAASGYTDLREKLKSMTSRDNYKAG) and 48–83 (AEPYAAPGVKRKYPEDSDPERSDFEEQQLQKEEEAR). Ala-2 bears the N-acetylalanine mark. Lys-57 is covalently cross-linked (Glycyl lysine isopeptide (Lys-Gly) (interchain with G-Cter in ubiquitin)). Residues 59-83 (KYPEDSDPERSDFEEQQLQKEEEAR) show a composition bias toward basic and acidic residues. Phosphoserine occurs at positions 64 and 69. A coiled-coil region spans residues 67-116 (ERSDFEEQQLQKEEEARKVKSGIRQMRLFSQDECAKIEARIDEVVSRAEK). Lys-86 participates in a covalent cross-link: Glycyl lysine isopeptide (Lys-Gly) (interchain with G-Cter in SUMO1). Residue Ser-87 is modified to Phosphoserine. Residue Lys-132 is modified to N6-acetyllysine. Tyr-139 is a catalytic residue. 2-oxoglutarate-binding residues include Asn-193, Tyr-195, and His-204. A disulfide bond links Cys-230 and Cys-267. Lys-235 is subject to N6-acetyllysine. 2-oxoglutarate-binding residues include His-266 and Arg-277. The disordered stretch occupies residues 298–394 (SSSVLPPSYA…PARKVKMRRH (97 aa)). Lys-321 is covalently cross-linked (Glycyl lysine isopeptide (Lys-Gly) (interchain with G-Cter in SUMO1)). Ser-325 is modified (phosphoserine). Lys-328 participates in a covalent cross-link: Glycyl lysine isopeptide (Lys-Gly) (interchain with G-Cter in SUMO2). Basic and acidic residues predominate over residues 328–349 (KADPDAAHRPRILEMDKEENRR). 2 positions are modified to phosphoserine: Ser-371 and Ser-384.

This sequence belongs to the alkB family. Monomer. Interacts with RBM33; promoting desumoylation by SENP1 and recruitment to N(6)-methyladenosine-containing mRNAs. Interacts (when acetylated by KAT8) with PSPC1; interaction facilitates recognition of N(6)-methyladenosine (m6A) mRNA. The cofactor is Fe(2+). Phosphorylated at Ser-87 and Ser-325 in response to reactive oxygen species (ROS), promoting sumoylation and inactivation. In terms of processing, acetylated by KAT8 at Lys-235, promoting interaction with PSPC1, thereby facilitating recognition of N(6)-methyladenosine (m6A) mRNA by ALKBH5. Deacetylated at Lys-235 by HDAC7. Post-translationally, sumoylated at Lys-86 and Lys-321 by PIAS4 following phosphorylation at Ser-87 and Ser-325 in response to reactive oxygen species (ROS), inhibiting the RNA demethylase activity. Desumoylated by SENP1; relieving RNA demethylase inhibition, leading to N(6)-methyladenosine-containing mRNAs demethylation. Ubiquitinated at Lys-57 via 'Lys-48'-linked polyubiquitin chain, leading to its degradation by the proteasome. Deubiquitinated at Lys-57 by USP9X, promoting its stabilizazion.

The protein resides in the nucleus speckle. It carries out the reaction an N(6)-methyladenosine in mRNA + 2-oxoglutarate + O2 = an adenosine in mRNA + formaldehyde + succinate + CO2. With respect to regulation, RNA demethylase activity is inhibited following sumoylation. Inhibition is relieved following desumoylation. Functionally, dioxygenase that specifically demethylates N(6)-methyladenosine (m6A) RNA, the most prevalent internal modification of messenger RNA (mRNA) in higher eukaryotes. Demethylates RNA by oxidative demethylation, which requires molecular oxygen, alpha-ketoglutarate and iron. Demethylation of m6A mRNA affects mRNA processing, translation and export. Can also demethylate N(6)-methyladenosine in single-stranded DNA (in vitro). Required for the late meiotic and haploid phases of spermatogenesis by mediating m6A demethylation in spermatocytes and round spermatids: m6A demethylation of target transcripts is required for correct splicing and the production of longer 3'-UTR mRNAs in male germ cells. Involved in paraspeckle assembly, a nuclear membraneless organelle, by undergoing liquid-liquid phase separation. Paraspeckle assembly is coupled with m6A demethylation of RNAs, such as NEAT1 non-coding RNA. Also acts as a negative regulator of T-cell development: inhibits gamma-delta T-cell proliferation via demethylation of JAG1 and NOTCH2 transcripts. Inhibits regulatory T-cell (Treg) recruitment by mediating demethylation and destabilization of CCL28 mRNAs. This Bos taurus (Bovine) protein is RNA demethylase ALKBH5 (ALKBH5).